The sequence spans 485 residues: Putative E3 ubiquitin-protein ligase makorin-4 (485 aa).

Positions 1–32 (MAEAAAPGTTVTTSGAGAAAAEAAETAEAVSP) are enriched in low complexity. Residues 1–63 (MAEAAAPGTT…GSDGSGGRGD (63 aa)) are disordered. Residues 45 to 63 (AGGGVGGSDGSDGSGGRGD) show a composition bias toward gly residues. C3H1-type zinc fingers lie at residues 90-117 (WTKQ…HDLS), 124-146 (VCKY…HSKP), and 243-270 (ETKK…HGDL). A makorin-type Cys-His region spans residues 271–298 (CDMCGLQVLHPMDAAQRSQHIQACIEAH). The RING-type zinc finger occupies 316–370 (CGICMEVVYEKANPNEHRFGILSNCNHTFCLKCIRKWRSAKEFESRIVKSCPQCR). The segment at 399 to 428 (AMSNKACKYFDEGRGSCPFGENCFYKHMYP) adopts a C3H1-type 4 zinc-finger fold.

The catalysed reaction is S-ubiquitinyl-[E2 ubiquitin-conjugating enzyme]-L-cysteine + [acceptor protein]-L-lysine = [E2 ubiquitin-conjugating enzyme]-L-cysteine + N(6)-ubiquitinyl-[acceptor protein]-L-lysine.. The protein operates within protein modification; protein ubiquitination. Its function is as follows. May act as a E3 ubiquitin ligase catalyzing the covalent attachment of ubiquitin moieties onto substrate proteins. This Homo sapiens (Human) protein is Putative E3 ubiquitin-protein ligase makorin-4 (MKRN4P).